Consider the following 543-residue polypeptide: CTP synthase (543 aa).

The interval 1–265 (MARYIFITGG…DDEVLAAFGI (265 aa)) is amidoligase domain. A CTP-binding site is contributed by Ser-13. Residue Ser-13 participates in UTP binding. 14–19 (SLGKGL) is a binding site for ATP. Tyr-54 contributes to the L-glutamine binding site. Position 71 (Asp-71) interacts with ATP. Residues Asp-71 and Glu-139 each coordinate Mg(2+). CTP-binding positions include 146–148 (DIE), 186–191 (KTKPTQ), and Lys-222. Residues 186–191 (KTKPTQ) and Lys-222 contribute to the UTP site. An ATP-binding site is contributed by 238 to 240 (RDV). The 252-residue stretch at 291–542 (TIAIVGKYTG…IQAAVVQSRL (252 aa)) folds into the Glutamine amidotransferase type-1 domain. Position 353 (Gly-353) interacts with L-glutamine. Catalysis depends on Cys-380, which acts as the Nucleophile; for glutamine hydrolysis. L-glutamine is bound by residues 381 to 384 (FGMQ), Glu-404, and Arg-470. Catalysis depends on residues His-515 and Glu-517.

Belongs to the CTP synthase family. In terms of assembly, homotetramer.

The enzyme catalyses UTP + L-glutamine + ATP + H2O = CTP + L-glutamate + ADP + phosphate + 2 H(+). The catalysed reaction is L-glutamine + H2O = L-glutamate + NH4(+). It carries out the reaction UTP + NH4(+) + ATP = CTP + ADP + phosphate + 2 H(+). It participates in pyrimidine metabolism; CTP biosynthesis via de novo pathway; CTP from UDP: step 2/2. Allosterically activated by GTP, when glutamine is the substrate; GTP has no effect on the reaction when ammonia is the substrate. The allosteric effector GTP functions by stabilizing the protein conformation that binds the tetrahedral intermediate(s) formed during glutamine hydrolysis. Inhibited by the product CTP, via allosteric rather than competitive inhibition. In terms of biological role, catalyzes the ATP-dependent amination of UTP to CTP with either L-glutamine or ammonia as the source of nitrogen. Regulates intracellular CTP levels through interactions with the four ribonucleotide triphosphates. This chain is CTP synthase, found in Bradyrhizobium sp. (strain BTAi1 / ATCC BAA-1182).